We begin with the raw amino-acid sequence, 132 residues long: MGAGVGVAGCTRGHRNWVPSQLPPREIKAGVSLAVVTEFAWVLAPRPKRATASALGTESPRFLDRPDFFDYPDSDQARLLAVAQFIGEKPIVFINSGSSPGLFHHILVGLLVVAFFFLLFQFCTHINFQKGA.

A helical transmembrane segment spans residues 100 to 120 (PGLFHHILVGLLVVAFFFLLF).

Testis-specific.

It is found in the cell membrane. Its function is as follows. May play a role in sperm-oocyte fusion during fertilization. In Homo sapiens (Human), this protein is Fertilization-influencing membrane protein.